A 175-amino-acid polypeptide reads, in one-letter code: MSTKEIICTLKGQFFLSPREEKFLRLLEEMGIPEEDIQEGIRECLKSVSPKKRKNFPLFKCFSKILEVNKVRALERGKREHLDWKRVFERKVSVVKHLLDFNYTEPKTEEEAEKTLQEIERKIFKKLWENLDKERKREIYNKYKEVKEDEELFKELIKHELRKIFQIPVLSLYVD.

Residues 107 to 138 (KTEEEAEKTLQEIERKIFKKLWENLDKERKRE) adopt a coiled-coil conformation.

This is an uncharacterized protein from Aquifex aeolicus (strain VF5).